A 381-amino-acid chain; its full sequence is ATP-dependent (S)-NAD(P)H-hydrate dehydratase (381 aa).

A YjeF C-terminal domain is found at 84 to 376 (AEAVVRRITP…EFLGKSLEDI (293 aa)). Residues Gly-197 and 250–256 (NVYEYKR) each bind (6S)-NADPHX. ATP contacts are provided by residues 290–294 (KGKAD) and 309–318 (GSPRRCGGQG). Asp-319 is a (6S)-NADPHX binding site.

The protein belongs to the NnrD/CARKD family. Mg(2+) serves as cofactor.

The catalysed reaction is (6S)-NADHX + ATP = ADP + phosphate + NADH + H(+). It catalyses the reaction (6S)-NADPHX + ATP = ADP + phosphate + NADPH + H(+). Functionally, catalyzes the dehydration of the S-form of NAD(P)HX at the expense of ATP, which is converted to ADP. Together with NAD(P)HX epimerase, which catalyzes the epimerization of the S- and R-forms, the enzyme allows the repair of both epimers of NAD(P)HX, a damaged form of NAD(P)H that is a result of enzymatic or heat-dependent hydration. This chain is ATP-dependent (S)-NAD(P)H-hydrate dehydratase, found in Sorghum bicolor (Sorghum).